We begin with the raw amino-acid sequence, 412 residues long: CCA-adding enzyme (412 aa).

Residues Ser-41 and Lys-44 each contribute to the ATP site. Ser-41 and Lys-44 together coordinate CTP. Positions 53, 55, and 106 each coordinate Mg(2+). Residues His-129, Lys-149, and Tyr-158 each coordinate ATP. His-129, Lys-149, and Tyr-158 together coordinate CTP.

This sequence belongs to the tRNA nucleotidyltransferase/poly(A) polymerase family. Archaeal CCA-adding enzyme subfamily. As to quaternary structure, homodimer. Forms a tetramer upon binding two tRNAs. However, tRNA-induced tetramer formation is not required for CCA addition. Mg(2+) is required as a cofactor.

It carries out the reaction a tRNA precursor + 2 CTP + ATP = a tRNA with a 3' CCA end + 3 diphosphate. The enzyme catalyses a tRNA with a 3' CCA end + 2 CTP + ATP = a tRNA with a 3' CCACCA end + 3 diphosphate. Its function is as follows. Catalyzes the addition and repair of the essential 3'-terminal CCA sequence in tRNAs without using a nucleic acid template. Adds these three nucleotides in the order of C, C, and A to the tRNA nucleotide-73, using CTP and ATP as substrates and producing inorganic pyrophosphate. tRNA 3'-terminal CCA addition is required both for tRNA processing and repair. Also involved in tRNA surveillance by mediating tandem CCA addition to generate a CCACCA at the 3' terminus of unstable tRNAs. While stable tRNAs receive only 3'-terminal CCA, unstable tRNAs are marked with CCACCA and rapidly degraded. The structural flexibility of RNA controls the choice between CCA versus CCACCA addition: following the first CCA addition cycle, nucleotide-binding to the active site triggers a clockwise screw motion, producing torque on the RNA. This ejects stable RNAs, whereas unstable RNAs are refolded while bound to the enzyme and subjected to a second CCA catalytic cycle. This chain is CCA-adding enzyme, found in Saccharolobus shibatae (strain ATCC 51178 / DSM 5389 / JCM 8931 / NBRC 15437 / B12) (Sulfolobus shibatae).